Reading from the N-terminus, the 693-residue chain is Elongation factor G 1 (693 aa).

The region spanning 4–281 (NKLRNIGISA…AVTRFLPSPH (278 aa)) is the tr-type G domain. GTP contacts are provided by residues 13–20 (AHIDSGKT), 80–84 (DTPGH), and 134–137 (NKCD).

It belongs to the TRAFAC class translation factor GTPase superfamily. Classic translation factor GTPase family. EF-G/EF-2 subfamily.

The protein localises to the cytoplasm. Functionally, catalyzes the GTP-dependent ribosomal translocation step during translation elongation. During this step, the ribosome changes from the pre-translocational (PRE) to the post-translocational (POST) state as the newly formed A-site-bound peptidyl-tRNA and P-site-bound deacylated tRNA move to the P and E sites, respectively. Catalyzes the coordinated movement of the two tRNA molecules, the mRNA and conformational changes in the ribosome. In Borreliella afzelii (strain PKo) (Borrelia afzelii), this protein is Elongation factor G 1.